Here is a 740-residue protein sequence, read N- to C-terminus: ATP-dependent RNA helicase DDX1 (740 aa).

Positions Met1–Ser295 are necessary for interaction with HNRNPK. Residues Met1–Val448 are interaction with dsRNA. The necessary for interaction with RELA stretch occupies residues Met1–Tyr525. The Helicase ATP-binding domain occupies Ala2–Trp428. ATP is bound at residue Ala46–Thr53. The region spanning Asp70–Phe247 is the B30.2/SPRY domain. Residues Lys239 and Lys268 each carry the N6-acetyllysine modification. The residue at position 281 (Lys281) is an N6-acetyllysine; alternate. A Glycyl lysine isopeptide (Lys-Gly) (interchain with G-Cter in SUMO2); alternate cross-link involves residue Lys281. The DEAD box signature appears at Asp370–Asp373. At Ser481 the chain carries Phosphoserine. In terms of domain architecture, Helicase C-terminal spans Lys493–Val681. The necessary for interaction with HNRNPK stretch occupies residues Tyr525 to Phe740.

It belongs to the DEAD box helicase family. DDX1 subfamily. In terms of assembly, found in a multi-helicase-TICAM1 complex at least composed of DHX36, DDX1, DDX21 and TICAM1; this complex exists in resting cells with or without poly(I:C) RNA ligand stimulation. Interacts with DHX36. Interacts (via B30.2/SPRY domain) with DDX21 (via N-terminus); this interaction serves as bridges to TICAM1. Interacts with FAM98A (via N- and C-terminus). Interacts with PHF5A (via C-terminus). Interacts with MBNL1. Interacts with CSTF2. Interacts with HNRNPK. Interacts with ATM. Interacts with RELA (via C-terminus). Component of the tRNA-splicing ligase complex. Interacts with PQBP1. Interacts with ERCC6. Post-translationally, phosphorylated by ATM kinase; phosphorylation is increased in response to ionizing radiation (IR).

The protein localises to the nucleus. It is found in the cytoplasm. It localises to the cytoplasmic granule. The protein resides in the cytosol. Its subcellular location is the mitochondrion. It carries out the reaction ATP + H2O = ADP + phosphate + H(+). Its function is as follows. Acts as an ATP-dependent RNA helicase, able to unwind both RNA-RNA and RNA-DNA duplexes. Possesses 5' single-stranded RNA overhang nuclease activity. Possesses ATPase activity on various RNA, but not DNA polynucleotides. May play a role in RNA clearance at DNA double-strand breaks (DSBs), thereby facilitating the template-guided repair of transcriptionally active regions of the genome. Together with RELA, acts as a coactivator to enhance NF-kappa-B-mediated transcriptional activation. Acts as a positive transcriptional regulator of cyclin CCND2 expression. Binds to the cyclin CCND2 promoter region. Associates with chromatin at the NF-kappa-B promoter region via association with RELA. Binds to poly(A) RNA. May be involved in 3'-end cleavage and polyadenylation of pre-mRNAs. Component of the tRNA-splicing ligase complex required to facilitate the enzymatic turnover of catalytic subunit RTCB: together with archease (ZBTB8OS), acts by facilitating the guanylylation of RTCB, a key intermediate step in tRNA ligation. Component of a multi-helicase-TICAM1 complex that acts as a cytoplasmic sensor of viral double-stranded RNA (dsRNA) and plays a role in the activation of a cascade of antiviral responses including the induction of pro-inflammatory cytokines via the adapter molecule TICAM1. Specifically binds (via helicase ATP-binding domain) on both short and long poly(I:C) dsRNA. The protein is ATP-dependent RNA helicase DDX1 (DDX1) of Macaca fascicularis (Crab-eating macaque).